A 285-amino-acid polypeptide reads, in one-letter code: uncharacterized protein (285 aa).

The 99-residue stretch at 184–282 folds into the HTH araC/xylS-type domain; it reads HSICNWVQDN…GLTPGEYSAR (99 aa). DNA-binding regions (H-T-H motif) lie at residues 201–222 and 249–272; these read ESVA…AQHG and IHEV…RRQF.

This is an uncharacterized protein from Escherichia coli (strain K12).